The chain runs to 729 residues: Ribosomal RNA large subunit methyltransferase K/L (729 aa).

The THUMP domain occupies 47 to 158 (TFYRLCLWSR…KNELTLALDL (112 aa)).

It belongs to the methyltransferase superfamily. RlmKL family.

It localises to the cytoplasm. The catalysed reaction is guanosine(2445) in 23S rRNA + S-adenosyl-L-methionine = N(2)-methylguanosine(2445) in 23S rRNA + S-adenosyl-L-homocysteine + H(+). It carries out the reaction guanosine(2069) in 23S rRNA + S-adenosyl-L-methionine = N(2)-methylguanosine(2069) in 23S rRNA + S-adenosyl-L-homocysteine + H(+). Functionally, specifically methylates the guanine in position 2445 (m2G2445) and the guanine in position 2069 (m7G2069) of 23S rRNA. This Dichelobacter nodosus (strain VCS1703A) protein is Ribosomal RNA large subunit methyltransferase K/L.